The following is a 341-amino-acid chain: Bis(monoacylglycero)phosphate synthase CLN5 (341 aa).

Over 1 to 13 the chain is Cytoplasmic; sequence MLRGGPCGAHWRP. A helical; Signal-anchor for type II membrane protein membrane pass occupies residues 14–30; that stretch reads ALALALLGLATILGASP. The Lumenal portion of the chain corresponds to 31-341; that stretch reads TSGQRWPVPY…PTRHTTFTDL (311 aa). Disulfide bonds link cysteine 53/cysteine 142 and cysteine 60/cysteine 148. The Proton acceptor role is filled by histidine 100. N-linked (GlcNAc...) asparagine glycans are attached at residues asparagine 113, asparagine 126, asparagine 161, and asparagine 186. Cysteine 214 functions as the Nucleophile; Acyl-thioester intermediate in the catalytic mechanism. N-linked (GlcNAc...) asparagine glycans are attached at residues asparagine 238, asparagine 254, and asparagine 264. The segment at 287–326 is membrane-anchoring; the sequence is FLMNFLKIFDTVIIHRQFYLFYNFEYWFLPMKPPFVKITY.

This sequence belongs to the CLN5 family. Multimer. Interacts with PPT1, TPP1, CLN3, CLN6, CLN8, ATP5F1A and ATP5F1B. Interacts with SORT1, RAB5A and RAB7A. In terms of processing, N-glycosylated with both high mannose and complex type sugars. Glycosylation is important for proper folding and trafficking to the lysosomes. Post-translationally, the type II membrane signal anchor is proteolytically cleaved to produce a mature form that is transported to the lysosomes (Bis(monoacylglycero)phosphate synthase CLN5, secreted form). Can undergo proteolytic cleavage at the C-terminus, probably by a cysteine protease and may involve the removal of approximately 10-15 residues from the C-terminal end. Heart, kidney, liver, spleen, muscle and rectum (at protein level).

The protein localises to the lysosome. It localises to the membrane. It catalyses the reaction S-hexadecanoyl-L-cysteinyl-[protein] + H2O = L-cysteinyl-[protein] + hexadecanoate + H(+). It carries out the reaction 2 1-acyl-sn-glycero-3-phospho-(1'-sn-glycerol) = 1-acyl-sn-glycero-3-phospho-(3'-acyl-sn-1'-glycerol) + sn-glycero-3-phospho-(1'-sn-glycerol). The enzyme catalyses 2 1-(9Z-octadecenoyl)-sn-glycero-3-phospho-(1'-sn-glycerol) = 1-(9Z-octadecenoyl)-sn-glycero-3-phospho-(3'-(9Z-octadecenoyl)-1'-sn-glycerol) + sn-glycero-3-phospho-(1'-sn-glycerol). The catalysed reaction is 2 1-octadecanoyl-sn-glycero-3-phospho-(1'-sn-glycerol) = 1-octadecanoyl-sn-glycero-3-phospho-(3'-octadecanoyl-1'-sn-glycerol) + sn-glycero-3-phospho-(1'-sn-glycerol). It catalyses the reaction 2 1-hexadecanoyl-sn-glycero-3-phospho-(1'-sn-glycerol) = 1-hexadecanoyl-sn-glycero-3-phospho-(3'-hexadecanoyl-1'-sn-glycerol) + sn-glycero-3-phospho-(1'-sn-glycerol). It carries out the reaction 2 1-tetradecanoyl-sn-glycero-3-phospho-(1'-sn-glycerol) = 1-tetradecanoyl-sn-glycero-3-phospho-(3'-tetradecanoyl-1'-sn-glycerol) + sn-glycero-3-phospho-(1'-sn-glycerol). Its function is as follows. Catalyzes the synthesis of bis(monoacylglycero)phosphate (BMP) via transacylation of 2 molecules of lysophosphatidylglycerol (LPG). BMP also known as lysobisphosphatidic acid plays a key role in the formation of intraluminal vesicles and in maintaining intracellular cholesterol homeostasis. Can use only LPG as the exclusive lysophospholipid acyl donor for base exchange and displays BMP synthase activity towards various LPGs (LPG 14:0, LPG 16:0, LPG 18:0, LPG 18:1) with a higher preference for longer chain lengths. Plays a role in influencing the retrograde trafficking of lysosomal sorting receptors SORT1 and IGF2R from the endosomes to the trans-Golgi network by controlling the recruitment of retromer complex to the endosomal membrane. Regulates the localization and activation of RAB7A which is required to recruit the retromer complex to the endosomal membrane. Exhibits palmitoyl protein thioesterase (S-depalmitoylation) activity in vitro and most likely plays a role in protein S-depalmitoylation. This Mus musculus (Mouse) protein is Bis(monoacylglycero)phosphate synthase CLN5 (Cln5).